Consider the following 146-residue polypeptide: Transcriptional regulator MraZ (146 aa).

2 SpoVT-AbrB domains span residues 5–48 and 77–120; these read TSYH…TLEE and ASEC…SRAK.

It belongs to the MraZ family. Forms oligomers.

It is found in the cytoplasm. Its subcellular location is the nucleoid. This Desulfosudis oleivorans (strain DSM 6200 / JCM 39069 / Hxd3) (Desulfococcus oleovorans) protein is Transcriptional regulator MraZ.